A 160-amino-acid chain; its full sequence is Ureidoglycolate lyase (160 aa).

Belongs to the ureidoglycolate lyase family. As to quaternary structure, homodimer. It depends on Ni(2+) as a cofactor.

It catalyses the reaction (S)-ureidoglycolate = urea + glyoxylate. It functions in the pathway nitrogen metabolism; (S)-allantoin degradation. Catalyzes the catabolism of the allantoin degradation intermediate (S)-ureidoglycolate, generating urea and glyoxylate. Involved in the anaerobic utilization of allantoin as sole nitrogen source. Reinforces the induction of genes involved in the degradation of allantoin and glyoxylate by producing glyoxylate. In Escherichia coli O139:H28 (strain E24377A / ETEC), this protein is Ureidoglycolate lyase.